The chain runs to 333 residues: Lipoyl synthase (333 aa).

Residues Cys56, Cys61, Cys67, Cys82, Cys86, Cys89, and Ser293 each contribute to the [4Fe-4S] cluster site. Residues 68 to 282 (WEDREATFLI…GRVGAELGFS (215 aa)) enclose the Radical SAM core domain. The disordered stretch occupies residues 301–333 (QQAMTARDQDRSEMSVPPESVSENSHGQRPSPW). Residues 314 to 325 (MSVPPESVSENS) are compositionally biased toward low complexity.

This sequence belongs to the radical SAM superfamily. Lipoyl synthase family. Requires [4Fe-4S] cluster as cofactor.

Its subcellular location is the cytoplasm. It carries out the reaction [[Fe-S] cluster scaffold protein carrying a second [4Fe-4S](2+) cluster] + N(6)-octanoyl-L-lysyl-[protein] + 2 oxidized [2Fe-2S]-[ferredoxin] + 2 S-adenosyl-L-methionine + 4 H(+) = [[Fe-S] cluster scaffold protein] + N(6)-[(R)-dihydrolipoyl]-L-lysyl-[protein] + 4 Fe(3+) + 2 hydrogen sulfide + 2 5'-deoxyadenosine + 2 L-methionine + 2 reduced [2Fe-2S]-[ferredoxin]. It participates in protein modification; protein lipoylation via endogenous pathway; protein N(6)-(lipoyl)lysine from octanoyl-[acyl-carrier-protein]: step 2/2. In terms of biological role, catalyzes the radical-mediated insertion of two sulfur atoms into the C-6 and C-8 positions of the octanoyl moiety bound to the lipoyl domains of lipoate-dependent enzymes, thereby converting the octanoylated domains into lipoylated derivatives. The protein is Lipoyl synthase of Frankia casuarinae (strain DSM 45818 / CECT 9043 / HFP020203 / CcI3).